The following is a 130-amino-acid chain: uncharacterized protein (130 aa).

2 disordered regions span residues 1–47 and 78–130; these read MTFY…QSNT and QTLE…SESS. The segment covering 13–33 has biased composition (polar residues); it reads QWKQLQTQQNKKNSPRPVTSS. Positions 86 to 110 are enriched in basic residues; it reads PSKHKRKRTKYRRTKKSKHHSRKKT. Residues 117–130 are compositionally biased toward basic and acidic residues; sequence SERDSTTGRESESS.

This is an uncharacterized protein from Torque teno mini virus 1 (isolate TLMV-CBD279).